The following is a 463-amino-acid chain: Argininosuccinate lyase (463 aa).

Belongs to the lyase 1 family. Argininosuccinate lyase subfamily.

It is found in the cytoplasm. It carries out the reaction 2-(N(omega)-L-arginino)succinate = fumarate + L-arginine. Its pathway is amino-acid biosynthesis; L-arginine biosynthesis; L-arginine from L-ornithine and carbamoyl phosphate: step 3/3. The polypeptide is Argininosuccinate lyase (Thermosynechococcus vestitus (strain NIES-2133 / IAM M-273 / BP-1)).